Here is a 2226-residue protein sequence, read N- to C-terminus: Rotatin (2226 aa).

The tract at residues 295–345 is disordered; it reads ARGTHHSQNPSPGSSSPRPSVVGRTGQRPRGDGQDWDAASSSGSSSHAHVN. Composition is skewed to low complexity over residues 304-318 and 332-343; these read PSPG…VVGR and AASSSGSSSHAH. At Ser310 the chain carries Phosphoserine. At Lys811 the chain carries N6-acetyllysine. Positions 1534 to 1554 are disordered; sequence SRTSQDRDPSSLSTSETTVAP. A compositionally biased stretch (polar residues) spans 1543–1554; the sequence is SSLSTSETTVAP.

The protein belongs to the rotatin family. Interacts with PPP1R35; this interaction allows the mutual recruitment to the centriole.

It is found in the cytoplasm. Its subcellular location is the cytoskeleton. The protein resides in the cilium basal body. The protein localises to the microtubule organizing center. It localises to the centrosome. In terms of biological role, involved in the genetic cascade that governs left-right specification. Plays a role in the maintenance of a normal ciliary structure. Required for correct asymmetric expression of NODAL, LEFTY and PITX2. This chain is Rotatin, found in Homo sapiens (Human).